The following is a 412-amino-acid chain: Peptidase T (412 aa).

Zn(2+) is bound at residue His79. Asp81 is an active-site residue. Asp142 lines the Zn(2+) pocket. The active-site Proton acceptor is the Glu176. Zn(2+) is bound by residues Glu177, Asp199, and His381.

It belongs to the peptidase M20B family. It depends on Zn(2+) as a cofactor.

It localises to the cytoplasm. It carries out the reaction Release of the N-terminal residue from a tripeptide.. Cleaves the N-terminal amino acid of tripeptides. This is Peptidase T from Exiguobacterium sp. (strain ATCC BAA-1283 / AT1b).